The chain runs to 360 residues: (+)-6a-hydroxymaackiain 3-O-methyltransferase 2 (360 aa).

S-adenosyl-L-methionine contacts are provided by residues 202-205 (VAGG), aspartate 226, 226-227 (DQ), 246-247 (DM), and lysine 260. The active-site Proton acceptor is the histidine 264.

The protein belongs to the class I-like SAM-binding methyltransferase superfamily. Cation-independent O-methyltransferase family. COMT subfamily.

It catalyses the reaction (+)-6a-hydroxymaackiain + S-adenosyl-L-methionine = (+)-pisatin + S-adenosyl-L-homocysteine + H(+). In terms of biological role, 3-O-methyltransferase involved in the phytoalexin pisatin biosynthesis. Can use (+)-6a-hydroxymaackiain, (+)-maackiain and with a lower activity (+)-medicarpin and 2,7,4'-trihydroxyisoflavanone as substrates, but not (-)-6a-hydroxymaackiain, daidzein, formononetin or isoliquiritigenin. This Pisum sativum (Garden pea) protein is (+)-6a-hydroxymaackiain 3-O-methyltransferase 2 (HMM2).